Reading from the N-terminus, the 155-residue chain is V-type proton ATPase 16 kDa proteolipid subunit c (155 aa).

The Lumenal portion of the chain corresponds to 1–10 (MSESKSGPEY). The chain crosses the membrane as a helical span at residues 11-33 (ASFFAVMGASAAMVFSALGAAYG). Over 34–55 (TAKSGTGIAAMSVMRPEQIMKS) the chain is Cytoplasmic. Residues 56-76 (IIPVVMAGIIAIYGLVVAVLI) form a helical membrane-spanning segment. Topologically, residues 77–92 (ANSLNDDISLYKSFLQ) are lumenal. The helical transmembrane segment at 93-114 (LGAGLSVGLSGLAAGFAIGIVG) threads the bilayer. Over 115–131 (DAGVRGTAQQPRLFVGM) the chain is Cytoplasmic. A helical transmembrane segment spans residues 132–152 (ILILIFAEVLGLYGLIVALIL). The Lumenal segment spans residues 153–155 (STK).

The protein belongs to the V-ATPase proteolipid subunit family. As to quaternary structure, V-ATPase is a heteromultimeric enzyme made up of two complexes: the ATP-hydrolytic V1 complex and the proton translocation V0 complex. The V1 complex consists of three catalytic AB heterodimers that form a heterohexamer, three peripheral stalks each consisting of EG heterodimers, one central rotor including subunits D and F, and the regulatory subunits C and H. The proton translocation complex V0 consists of the proton transport subunit a, a ring of proteolipid subunits c9c'', rotary subunit d, subunits e and f, and the accessory subunits ATP6AP1/Ac45 and ATP6AP2/PRR. Interacts with the V0 complex V-ATPase subunit a4 ATP6V0A4. Interacts with LASS2. Interacts with RNF182; this interaction leads to ubiquitination and degradation via the proteasome pathway. (Microbial infection) Interacts with HTLV-1 accessory protein p12I. Post-translationally, ubiquitinated by RNF182, leading to its degradation via the ubiquitin-proteasome pathway.

The protein localises to the cytoplasmic vesicle. Its subcellular location is the clathrin-coated vesicle membrane. The protein resides in the secretory vesicle. It is found in the synaptic vesicle membrane. Its function is as follows. Proton-conducting pore forming subunit of the V0 complex of vacuolar(H+)-ATPase (V-ATPase), a multisubunit enzyme composed of a peripheral complex (V1) that hydrolyzes ATP and a membrane integral complex (V0) that translocates protons. V-ATPase is responsible for acidifying and maintaining the pH of intracellular compartments, and in some cell types, it is targeted to the plasma membrane, where it is responsible for acidifying the extracellular environment. In Homo sapiens (Human), this protein is V-type proton ATPase 16 kDa proteolipid subunit c (ATP6V0C).